A 353-amino-acid polypeptide reads, in one-letter code: Lipase-specific foldase (353 aa).

The Cytoplasmic portion of the chain corresponds to 1–19 (MAQADRPARGGLAARPMRG). Residues 20-40 (ASFALAGLVACAACAAVVLWL) form a helical membrane-spanning segment. The Periplasmic segment spans residues 41 to 353 (RPAAPSPAPA…AASLDRGAGG (313 aa)).

The protein belongs to the lipase chaperone family. In terms of assembly, monomer. Interacts with lipase (lip).

The protein resides in the cell inner membrane. Its function is as follows. Involved in the folding of the extracellular lipase (lip) during its passage through the periplasm. The chain is Lipase-specific foldase from Burkholderia plantarii.